A 220-amino-acid polypeptide reads, in one-letter code: Deoxyribose-phosphate aldolase (220 aa).

Asp89 functions as the Proton donor/acceptor in the catalytic mechanism. Lys151 serves as the catalytic Schiff-base intermediate with acetaldehyde. Lys180 serves as the catalytic Proton donor/acceptor.

Belongs to the DeoC/FbaB aldolase family. DeoC type 1 subfamily.

It localises to the cytoplasm. It catalyses the reaction 2-deoxy-D-ribose 5-phosphate = D-glyceraldehyde 3-phosphate + acetaldehyde. It functions in the pathway carbohydrate degradation; 2-deoxy-D-ribose 1-phosphate degradation; D-glyceraldehyde 3-phosphate and acetaldehyde from 2-deoxy-alpha-D-ribose 1-phosphate: step 2/2. Its function is as follows. Catalyzes a reversible aldol reaction between acetaldehyde and D-glyceraldehyde 3-phosphate to generate 2-deoxy-D-ribose 5-phosphate. The polypeptide is Deoxyribose-phosphate aldolase (Streptococcus pneumoniae (strain Taiwan19F-14)).